We begin with the raw amino-acid sequence, 169 residues long: 3-hydroxyacyl-[acyl-carrier-protein] dehydratase FabZ (169 aa).

Histidine 66 is a catalytic residue.

The protein belongs to the thioester dehydratase family. FabZ subfamily.

It is found in the cytoplasm. It catalyses the reaction a (3R)-hydroxyacyl-[ACP] = a (2E)-enoyl-[ACP] + H2O. Functionally, involved in unsaturated fatty acids biosynthesis. Catalyzes the dehydration of short chain beta-hydroxyacyl-ACPs and long chain saturated and unsaturated beta-hydroxyacyl-ACPs. The protein is 3-hydroxyacyl-[acyl-carrier-protein] dehydratase FabZ of Helicobacter hepaticus (strain ATCC 51449 / 3B1).